A 248-amino-acid polypeptide reads, in one-letter code: mRNA-decapping protein OPG122 (248 aa).

Positions histidine 45–lysine 227 constitute a Nudix hydrolase domain. A Nudix box motif is present at residues glycine 126–asparagine 147. Glutamate 132 lines the Mg(2+) pocket. Glutamate 141 (nucleophile) is an active-site residue. Glutamate 145 contributes to the Mn(2+) binding site. Aspartate 167 provides a ligand contact to Mg(2+).

It belongs to the Nudix hydrolase family. Mg(2+) serves as cofactor. It depends on Mn(2+) as a cofactor.

The protein localises to the host mitochondrion. In terms of biological role, decapping enzyme that remove the protective 5'-cap from both host and viral mRNAs to commit transcripts for decay by the cellular exonuclease XRN1. Preferentially targets spliced mRNAs and since all viral genes are intronless, it preferentially targets host over viral transcripts. Acceleration of the turnover of cellular transcripts promotes the shutoff of host protein synthesis and therefore diminish the magnitude of antiviral response. In Vaccinia virus (strain Copenhagen) (VACV), this protein is mRNA-decapping protein OPG122 (OPG122).